We begin with the raw amino-acid sequence, 67 residues long: MRLKHNEMRSPIMSCSKRMEWKSMPSPLIFKQQMILTQSLNQKLKTIKACMYQIRKLSKLKALYRGL.

It belongs to the rhabdoviruses C protein family.

In terms of biological role, seems to stimulates transcription by the viral polymerase. May play a role in viral pathogenesis or transmission by insects vectors. This Vesicular stomatitis Indiana virus (strain 85CLB South America) (VSIV) protein is Protein C' (P).